The sequence spans 154 residues: 6,7-dimethyl-8-ribityllumazine synthase (154 aa).

Residues F22, 56 to 58 (AFE), and 80 to 82 (AVI) each bind 5-amino-6-(D-ribitylamino)uracil. Residue 85-86 (ET) participates in (2S)-2-hydroxy-3-oxobutyl phosphate binding. H88 serves as the catalytic Proton donor. F113 provides a ligand contact to 5-amino-6-(D-ribitylamino)uracil. A (2S)-2-hydroxy-3-oxobutyl phosphate-binding site is contributed by R127.

It belongs to the DMRL synthase family.

It carries out the reaction (2S)-2-hydroxy-3-oxobutyl phosphate + 5-amino-6-(D-ribitylamino)uracil = 6,7-dimethyl-8-(1-D-ribityl)lumazine + phosphate + 2 H2O + H(+). It participates in cofactor biosynthesis; riboflavin biosynthesis; riboflavin from 2-hydroxy-3-oxobutyl phosphate and 5-amino-6-(D-ribitylamino)uracil: step 1/2. Functionally, catalyzes the formation of 6,7-dimethyl-8-ribityllumazine by condensation of 5-amino-6-(D-ribitylamino)uracil with 3,4-dihydroxy-2-butanone 4-phosphate. This is the penultimate step in the biosynthesis of riboflavin. In Thermoanaerobacter pseudethanolicus (strain ATCC 33223 / 39E) (Clostridium thermohydrosulfuricum), this protein is 6,7-dimethyl-8-ribityllumazine synthase.